Consider the following 433-residue polypeptide: Polygalacturonase ADPG2 (433 aa).

Residues 1–24 (MARCTNLVTVFLLWALLMFSWCKA) form the signal peptide. PbH1 repeat units lie at residues 223–249 (CSNVQVSNVVVTAPADSPNTDGIHITN), 250–271 (TQNIRVSESIIGTGDDCISIES), 273–293 (SQNVQINDITCGPGHGISIGS), 303–324 (VSGVTVDGAKLSGTDNGVRIKT), and 332–353 (ASNIIFQNIQMDNVKNPIIIDQ). Asp264 serves as the catalytic Proton donor. Residue His287 is part of the active site.

It belongs to the glycosyl hydrolase 28 family. Expressed in roots and in the abscission zone of the sepals, petals and stamens of flowers, at the base of cauline leaves and in the basal cell of trichomes from senescing leaves. Found at the site of lateral root emergence, in the dehiscence zone of anthers and maturing siliques. Also expressed early in anther development, at the time of microspore separation. Expressed in germinating seeds, at the point at which the radicle broke through the seed coat. Not expressed at the junction between the seed and the funiculus or in the dehiscence zone of anthers or pods.

It localises to the secreted. The protein localises to the cell wall. The catalysed reaction is (1,4-alpha-D-galacturonosyl)n+m + H2O = (1,4-alpha-D-galacturonosyl)n + (1,4-alpha-D-galacturonosyl)m.. Functionally, polygalacturonase involved in cell separation in the final stages of pod shatter, in anther dehiscence and in floral organ abscission. In Arabidopsis thaliana (Mouse-ear cress), this protein is Polygalacturonase ADPG2 (ADPG2).